Consider the following 156-residue polypeptide: Peptidyl-prolyl cis-trans isomerase cypE (156 aa).

Residues 2–155 enclose the PPIase cyclophilin-type domain; that stretch reads TEQTVTLQTT…DEIRIIKATA (154 aa).

It belongs to the cyclophilin-type PPIase family. Interacts with snwA.

Its subcellular location is the cytoplasm. The protein localises to the nucleus. The catalysed reaction is [protein]-peptidylproline (omega=180) = [protein]-peptidylproline (omega=0). Functionally, catalyzes the cis-trans isomerization of proline imidic peptide bonds in oligopeptides. Plays a role in protein folding, transport and assembly. This chain is Peptidyl-prolyl cis-trans isomerase cypE (cypE), found in Dictyostelium discoideum (Social amoeba).